The primary structure comprises 406 residues: LIM/homeobox protein Lhx1 (406 aa).

LIM zinc-binding domains follow at residues 4–54 (CAGC…CKND) and 63–117 (CAGC…CKED). Disordered stretches follow at residues 128 to 187 (NSLH…RTTI) and 293 to 374 (YDFF…EVFG). Positions 137–148 (SDPSLSPDSQDP) are enriched in low complexity. The segment covering 151 to 167 (DDAKDSESANVSDKEAG) has biased composition (basic and acidic residues). A Phosphoserine modification is found at Ser-162. Residues 180 to 239 (RRGPRTTIKAKQLETLKAAFAATPKPTRHIREQLAQETGLNMRVIQVWFQNRRSKERRMK) constitute a DNA-binding region (homeobox). Residues 315 to 327 (PSSGPSGTPLGGL) are compositionally biased toward low complexity. Over residues 352-362 (GDSPSPEPSLP) the composition is skewed to pro residues.

In terms of assembly, interacts with LDB1 via the tandem LIM domains. As to expression, expressed in the brain, thymus, and tonsils. Expressed in samples from patients with chronic myeloid leukemia (CML) and in 58% of acute myeloid leukemia (AML) cell lines.

It localises to the nucleus. In terms of biological role, potential transcription factor. May play a role in early mesoderm formation and later in lateral mesoderm differentiation and neurogenesis. The protein is LIM/homeobox protein Lhx1 (LHX1) of Homo sapiens (Human).